The sequence spans 226 residues: Translation initiation factor 6 (226 aa).

This sequence belongs to the eIF-6 family.

Functionally, binds to the 50S ribosomal subunit and prevents its association with the 30S ribosomal subunit to form the 70S initiation complex. The protein is Translation initiation factor 6 of Haloquadratum walsbyi (strain DSM 16790 / HBSQ001).